A 365-amino-acid polypeptide reads, in one-letter code: Ribosomal RNA large subunit methyltransferase F (365 aa).

A disordered region spans residues 1–48 (MSKPAVKSVQSATAKTATRAVNIRQKVKAPKQAKPEGKGSTKPVKDRP). The segment covering 33–48 (AKPEGKGSTKPVKDRP) has biased composition (basic and acidic residues).

This sequence belongs to the methyltransferase superfamily. METTL16/RlmF family.

The protein localises to the cytoplasm. It catalyses the reaction adenosine(1618) in 23S rRNA + S-adenosyl-L-methionine = N(6)-methyladenosine(1618) in 23S rRNA + S-adenosyl-L-homocysteine + H(+). Specifically methylates the adenine in position 1618 of 23S rRNA. The protein is Ribosomal RNA large subunit methyltransferase F of Shewanella baltica (strain OS223).